A 478-amino-acid polypeptide reads, in one-letter code: Cobyric acid synthase (478 aa).

Positions 250–437 constitute a GATase cobBQ-type domain; it reads QLRVVVPVLP…VHGVFDHPMH (188 aa). The Nucleophile role is filled by C331. The active site involves H429.

Belongs to the CobB/CobQ family. CobQ subfamily.

It functions in the pathway cofactor biosynthesis; adenosylcobalamin biosynthesis. Functionally, catalyzes amidations at positions B, D, E, and G on adenosylcobyrinic A,C-diamide. NH(2) groups are provided by glutamine, and one molecule of ATP is hydrogenolyzed for each amidation. The polypeptide is Cobyric acid synthase (Xanthomonas euvesicatoria pv. vesicatoria (strain 85-10) (Xanthomonas campestris pv. vesicatoria)).